We begin with the raw amino-acid sequence, 779 residues long: Subtilisin-like protease SBT3.18 (779 aa).

A signal peptide spans 1–21 (MYFWVMFFTLMIKVKLYITNG). The propeptide at 22 to 109 (DIFQNRPTVY…VFKSKSLKLH (88 aa)) is activation peptide. The 80-residue stretch at 30 to 109 (VYVVYLGANR…VFKSKSLKLH (80 aa)) folds into the Inhibitor I9 domain. An N-linked (GlcNAc...) asparagine glycan is attached at Asn84. The Peptidase S8 domain maps to 113–621 (SWDFLGLAVD…AGHINPLKAM (509 aa)). Active-site charge relay system residues include Asp144 and His221. N-linked (GlcNAc...) asparagine glycans are attached at residues Asn236 and Asn406. The active-site Charge relay system is Ser553.

This sequence belongs to the peptidase S8 family.

It is found in the secreted. This Arabidopsis thaliana (Mouse-ear cress) protein is Subtilisin-like protease SBT3.18.